We begin with the raw amino-acid sequence, 102 residues long: Small ribosomal subunit protein uS10 (102 aa).

The protein belongs to the universal ribosomal protein uS10 family. As to quaternary structure, part of the 30S ribosomal subunit.

Involved in the binding of tRNA to the ribosomes. The sequence is that of Small ribosomal subunit protein uS10 from Leuconostoc citreum (strain KM20).